Consider the following 369-residue polypeptide: Porin-like protein BUsg_347 (369 aa).

A signal peptide spans 1–23 (MKNHKSLAILIPMLFAGSTAVNA).

The protein belongs to the Gram-negative porin family. In terms of assembly, homotrimer.

The protein localises to the cell outer membrane. Functionally, forms pores that allow passive diffusion of small molecules across the membrane. The sequence is that of Porin-like protein BUsg_347 from Buchnera aphidicola subsp. Schizaphis graminum (strain Sg).